We begin with the raw amino-acid sequence, 238 residues long: MGRKWANIVAKKTAKDGATSKIYAKFGVEIYAAAKQGEPDPELNTSLKFVIERAKQAQVPKHVIDKAIDKAKGGGDETFVQGRYEGFGPNGSMIIAETLTSNVNRTIANVRTIFNKKGGNIGAAGSVSYMFDNTGVIVFKGTDPDHIFEILLEAEVDVRDVTEEEGNIVIYTEPTDLHKGIAALKAAGITEFSTTELEMIAQSEVELSPEDLEIFEGLVDALEDDDDVQKVYHNVANL.

Belongs to the TACO1 family. YeeN subfamily.

The protein resides in the cytoplasm. This Escherichia coli (strain UTI89 / UPEC) protein is Probable transcriptional regulatory protein YeeN.